Here is a 145-residue protein sequence, read N- to C-terminus: MKVILLEDIASLGKKNEIIDVSDGYAKNFLIRQKKAVALTNKSQEVLNKDLAILEAQEQQAILDATLLKDKLEQKPLQFFLKTNNLQTFGSISNKQIIDEINKEQKFITKHMITKPHALGIGEHIVEILLHKKVTAKLHVIVSKE.

Belongs to the bacterial ribosomal protein bL9 family.

Its function is as follows. Binds to the 23S rRNA. The chain is Large ribosomal subunit protein bL9 from Ureaplasma parvum serovar 3 (strain ATCC 700970).